Reading from the N-terminus, the 670-residue chain is Sodium, potassium, lithium and rubidium/H(+) antiporter (670 aa).

Transmembrane regions (helical) follow at residues 5 to 27 (LVVL…IPFI), 46 to 66 (GLHF…PLLF), 83 to 103 (PILL…GYTI), 105 to 125 (WMIP…LSPT), 156 to 176 (ASGL…AFSL), 182 to 202 (SFVF…FLII), 228 to 248 (FVIY…VVAG), 276 to 296 (IILF…IPDV), 314 to 334 (YILV…LFFW), 355 to 375 (LLIS…FSIP), and 389 to 409 (LILF…TVVL).

This sequence belongs to the monovalent cation:proton antiporter 1 (CPA1) transporter (TC 2.A.36) family. Nhak (TC 2.A.36.3.2) subfamily.

It is found in the cell membrane. Functionally, transporter involved in the efflux of sodium, potassium, lithium and rubidium. The sequence is that of Sodium, potassium, lithium and rubidium/H(+) antiporter (nhaK) from Bacillus subtilis (strain 168).